The primary structure comprises 1004 residues: MAEHESLEFGKADFVLLDNVSLEEFMANLKLRFEKGRIYSYIGEVVVSVNPYRAMNIYGRDVIEQYKGRELYERPPHLFAIADAAYKAMKRRNKDTCIVISGESGAGKTEASKYIMQYIAAITNPSQRAEVERVKNMLLKSNCVLEAFGNAKTNRNDNSSRFGKYMDINFDFKGDPIGGHINNYLLEKSRVIFQQEGERSFHSFYQLVKGAPDAQLRSLHIQRDPTAYNYIKVGGQLKSSINDSAEFKAVADAMKVIGFTTEEIQTVYKILATILHLGNLKFGTDGDVTLIENSKLVSVLGDLLSTKEENVEKAMLYRTVATGRDVIDKQHTHQEASYGRDALAKAIYERLFCWIVGRINDIIEVKNYDARVHGKNTVIGVLDIYGFEIFQNNSFEQFCINYCNEKLQQLFIQLVLKQEQEEYQREGIPWKHIDYFNNQIIVDLVEQQHKGIFAVLDEACMNVGKVTDEMFLQALNGKLAKHAHYTSRKLSPTDKNLEFERDFRIRHYAGDVTYSVVGFIDKNKDTLFQDFKRLLYNSSNPVLKAMWPEGKLSITEVTKRPLTAATLFKNSMISLVEKLASKEPYYVRCIKPNDVKSPLLFEHERCKHQVEYLGLLENVRVRRAGFANRQTYPRFLQRYKMISEFTWPNHDLSSDKEAVKRLLQGCGFEHDVAYGKTKVFIRTPRTIFSLEEQRAEMVKRIVLFLQKVWRGTLARMRYRRMRAALIIIRAYRRYKVKSYIREVIRRFKNVRDMKDHGKHVKWPTPPKVLRKFEEALRSIYNRWWAWTLIKPLSPEKTVQIRAKVATLECLKGQRADLGLQRAWEGNYLKKDSPGTASSFTLVSSDLQRKDKFMRVLFSSNVRKINRFNKAEDRALLITDRHLYKMDPLKQYKPMKSIPLYNVTGVSISPGKDQLVVFHTKDNRDLIVCLQGMVPAGDSRIGELVGTLLSHFKSEKRKLQVNTVSPIHCSMNGRKCTVVVETKISQSQPDFTKSRSGYILSVPGN.

Residues 9–695 (FGKADFVLLD…TIFSLEEQRA (687 aa)) form the Myosin motor domain. Residue 102-109 (GESGAGKT) coordinates ATP. Positions 572–594 (MISLVEKLASKEPYYVRCIKPND) are actin-binding. 2 consecutive IQ domains span residues 699 to 719 (KRIV…MRYR) and 721 to 741 (MRAA…SYIR). The TH1 domain maps to 812–1003 (GQRADLGLQR…RSGYILSVPG (192 aa)).

The protein belongs to the TRAFAC class myosin-kinesin ATPase superfamily. Myosin family. As to quaternary structure, interacts (via the two IQ motifs) with calmodulin. Interacts with F-actin.

The protein localises to the cytoplasm. Its subcellular location is the perikaryon. The protein resides in the cell projection. It is found in the dendrite. It localises to the early endosome. The protein localises to the cell cortex. Its function is as follows. Unconventional myosin that functions as actin-based motor protein with ATPase activity. Plays a role in the formation of Kupffer's vesicle, an organ that functions as a left-right organizer during embryogenesis. Plays a role in vesicular trafficking events that are required for normal lumen expansion of Kupffer's vesicle. Required for normal orientation of cilia in Kupffer's vesicle, and thus for normal, unidirectional circular flow and normal angular flow velocity, which then mediates asymmetric gene expression and left-right asymmetric development. Plays a role in endosomal protein trafficking, and especially in the transfer of cargo proteins from early to recycling endosomes. Required for normal planar cell polarity in ciliated cells, for normal rotational polarity of cilia, and for coordinated, unidirectional ciliary movement. The sequence is that of Unconventional myosin-Id (myo1d) from Danio rerio (Zebrafish).